The primary structure comprises 246 residues: ATP synthase subunit a (246 aa).

The propeptide at 1–3 is removed in mature form; sequence MIY. A run of 7 helical transmembrane segments spans residues 25-45, 51-71, 79-99, 112-132, 138-158, 178-198, and 203-223; these read VNNY…SVFL, LGFN…LNMV, GGMY…ANLV, LVAI…MGLS, FFAL…LVLI, VLSG…LMGS, and FMGG…EFAI.

Belongs to the ATPase A chain family. As to quaternary structure, F-type ATPases have 2 components, CF(1) - the catalytic core - and CF(0) - the membrane proton channel. CF(1) has five subunits: alpha(3), beta(3), gamma(1), delta(1), epsilon(1). CF(0) has three main subunits: a, b and c.

Its subcellular location is the mitochondrion inner membrane. Functionally, mitochondrial membrane ATP synthase (F(1)F(0) ATP synthase or Complex V) produces ATP from ADP in the presence of a proton gradient across the membrane which is generated by electron transport complexes of the respiratory chain. F-type ATPases consist of two structural domains, F(1) - containing the extramembraneous catalytic core and F(0) - containing the membrane proton channel, linked together by a central stalk and a peripheral stalk. During catalysis, ATP synthesis in the catalytic domain of F(1) is coupled via a rotary mechanism of the central stalk subunits to proton translocation. Key component of the proton channel; it may play a direct role in the translocation of protons across the membrane. The sequence is that of ATP synthase subunit a (ATP6) from Debaryomyces hansenii (strain ATCC 36239 / CBS 767 / BCRC 21394 / JCM 1990 / NBRC 0083 / IGC 2968) (Yeast).